Consider the following 217-residue polypeptide: Ras-related protein RGP2 (217 aa).

GTP is bound by residues 19–26 (GDSGVGKS), 67–71 (DTAGQ), and 125–128 (NKSD). Residues Cys214 and Cys215 are each lipidated (S-geranylgeranyl cysteine).

The protein belongs to the small GTPase superfamily. Rab family.

It is found in the cell membrane. The chain is Ras-related protein RGP2 (RGP2) from Oryza sativa subsp. japonica (Rice).